Consider the following 208-residue polypeptide: FMN-dependent NADH:quinone oxidoreductase (208 aa).

FMN contacts are provided by residues S10, 16-18 (SVS), 94-97 (MYNF), and 138-141 (SRGG).

It belongs to the azoreductase type 1 family. As to quaternary structure, homodimer. FMN serves as cofactor.

The catalysed reaction is 2 a quinone + NADH + H(+) = 2 a 1,4-benzosemiquinone + NAD(+). It carries out the reaction N,N-dimethyl-1,4-phenylenediamine + anthranilate + 2 NAD(+) = 2-(4-dimethylaminophenyl)diazenylbenzoate + 2 NADH + 2 H(+). Functionally, quinone reductase that provides resistance to thiol-specific stress caused by electrophilic quinones. Its function is as follows. Also exhibits azoreductase activity. Catalyzes the reductive cleavage of the azo bond in aromatic azo compounds to the corresponding amines. In Hyphomonas neptunium (strain ATCC 15444), this protein is FMN-dependent NADH:quinone oxidoreductase.